The sequence spans 113 residues: Small ribosomal subunit protein uS17 (113 aa).

It belongs to the universal ribosomal protein uS17 family. As to quaternary structure, part of the 30S ribosomal subunit.

Its function is as follows. One of the primary rRNA binding proteins, it binds specifically to the 5'-end of 16S ribosomal RNA. The protein is Small ribosomal subunit protein uS17 of Sulfurisphaera tokodaii (strain DSM 16993 / JCM 10545 / NBRC 100140 / 7) (Sulfolobus tokodaii).